A 906-amino-acid polypeptide reads, in one-letter code: Protein translocase subunit SecA (906 aa).

ATP-binding positions include Gln87, 105–109 (GEGKT), and Asp507. Zn(2+) is bound by residues Cys890, Cys892, Cys901, and His902.

It belongs to the SecA family. In terms of assembly, monomer and homodimer. Part of the essential Sec protein translocation apparatus which comprises SecA, SecYEG and auxiliary proteins SecDF-YajC and YidC. Zn(2+) serves as cofactor.

It localises to the cell inner membrane. It is found in the cytoplasm. It catalyses the reaction ATP + H2O + cellular proteinSide 1 = ADP + phosphate + cellular proteinSide 2.. In terms of biological role, part of the Sec protein translocase complex. Interacts with the SecYEG preprotein conducting channel. Has a central role in coupling the hydrolysis of ATP to the transfer of proteins into and across the cell membrane, serving both as a receptor for the preprotein-SecB complex and as an ATP-driven molecular motor driving the stepwise translocation of polypeptide chains across the membrane. The chain is Protein translocase subunit SecA from Thiobacillus denitrificans (strain ATCC 25259 / T1).